A 254-amino-acid chain; its full sequence is MRVLLSNDDGVHAAGLKALADAFHGDEVWVVAPDREQSASSHAISLHRPLRLLEVAPRWYAVDGTPTDAVYMGLNLVLRDARPDVVVSGVNHGPNLGNDVLYSGTVAAAMEGALLGVNAVAVSLAAPPPHDFGEAARFAAALARQVVARPPPAPVLLNVNVPPGPVRGYRFARLGRRTYGNEVVEKTDPRGRKYYWIGGEGRVHNEDIPGSDCNTVLLERLAAVTPLHLDGTHDPMFQELRSWTVPGYEKEPAP.

Residues Asp-8, Asp-9, Ser-38, and Asn-91 each coordinate a divalent metal cation.

Belongs to the SurE nucleotidase family. A divalent metal cation serves as cofactor.

The protein localises to the cytoplasm. It carries out the reaction a ribonucleoside 5'-phosphate + H2O = a ribonucleoside + phosphate. In terms of biological role, nucleotidase that shows phosphatase activity on nucleoside 5'-monophosphates. This chain is 5'-nucleotidase SurE, found in Anaeromyxobacter sp. (strain K).